A 495-amino-acid polypeptide reads, in one-letter code: Aspartyl/glutamyl-tRNA(Asn/Gln) amidotransferase subunit B (495 aa).

It belongs to the GatB/GatE family. GatB subfamily. As to quaternary structure, heterotrimer of A, B and C subunits.

It catalyses the reaction L-glutamyl-tRNA(Gln) + L-glutamine + ATP + H2O = L-glutaminyl-tRNA(Gln) + L-glutamate + ADP + phosphate + H(+). The enzyme catalyses L-aspartyl-tRNA(Asn) + L-glutamine + ATP + H2O = L-asparaginyl-tRNA(Asn) + L-glutamate + ADP + phosphate + 2 H(+). In terms of biological role, allows the formation of correctly charged Asn-tRNA(Asn) or Gln-tRNA(Gln) through the transamidation of misacylated Asp-tRNA(Asn) or Glu-tRNA(Gln) in organisms which lack either or both of asparaginyl-tRNA or glutaminyl-tRNA synthetases. The reaction takes place in the presence of glutamine and ATP through an activated phospho-Asp-tRNA(Asn) or phospho-Glu-tRNA(Gln). The polypeptide is Aspartyl/glutamyl-tRNA(Asn/Gln) amidotransferase subunit B (Crocosphaera subtropica (strain ATCC 51142 / BH68) (Cyanothece sp. (strain ATCC 51142))).